Here is a 417-residue protein sequence, read N- to C-terminus: Diphosphomevalonate decarboxylase 1 (417 aa).

22–25 lines the (R)-5-diphosphomevalonate pocket; it reads YWGK. A Peroxisomal targeting signal PTS2 motif is present at residues 39–47; the sequence is RVSLDPDHL. Residues Arg-77, 160 to 165, and Thr-216 contribute to the (R)-5-diphosphomevalonate site; that span reads SGSACR.

This sequence belongs to the diphosphomevalonate decarboxylase family. Homodimer.

It is found in the peroxisome. The enzyme catalyses (R)-5-diphosphomevalonate + ATP = isopentenyl diphosphate + ADP + phosphate + CO2. The protein operates within isoprenoid biosynthesis; isopentenyl diphosphate biosynthesis via mevalonate pathway; isopentenyl diphosphate from (R)-mevalonate: step 3/3. In terms of biological role, performs the first committed step in the biosynthesis of isoprene-containing compounds such as sterols and terpenoids. Component of the triterpene saponins (e.g. ginsenosides or panaxosides) and phytosterols biosynthetic pathways. Catalyzes the conversion of mevalonate diphosphate to isopentenyl diphosphate (IPP). The sequence is that of Diphosphomevalonate decarboxylase 1 from Panax ginseng (Korean ginseng).